A 469-amino-acid chain; its full sequence is Cold shock protein CS66 (469 aa).

21 tandem repeats follow at residues 9 to 31 (GEKK…DHKE), 49 to 62 (TGGA…TGTT), 72 to 94 (GEKK…DHQQ), 95 to 108 (TGGT…TGTA), 115 to 128 (TGGT…TGTA), 135 to 148 (TNGT…TGTA), 149 to 162 (TGGS…TGVT), 170 to 192 (GEKK…DNQQ), 193 to 206 (TAGT…FATG), 213 to 226 (TGGT…AGVT), 234 to 256 (GEKK…DHQQ), 257 to 270 (TGGT…TGAA), 277 to 290 (GGGT…TGMT), 298 to 320 (GGKK…DNQQ), 321 to 334 (TGGA…TGAA), 341 to 354 (SGGT…TGMT), 362 to 384 (GEKK…DHQQ), 385 to 398 (TGGA…TGTA), 405 to 418 (GGGT…TGMT), 428 to 441 (TGGT…TGTT), and 452 to 469 (GEKK…PGQH). A 7 X 23 AA approximate repeats region spans residues 9-390 (GEKKGIMEKI…DHQQTGGAYG (382 aa)). Positions 49–441 (TGGAYGQEGH…HGQHGHTGTT (393 aa)) are 14 X 14 AA approximate repeats. Positions 87-112 (GGHADHQQTGGTYGQQGHTGTATHGT) are disordered. Residues 93 to 112 (QQTGGTYGQQGHTGTATHGT) show a composition bias toward low complexity. The segment covering 203 to 214 (FATGTHGTPATG) has biased composition (low complexity). Residues 203 to 469 (FATGTHGTPA…KIKDKLPGQH (267 aa)) are disordered. Residues 233–254 (TGEKKGLMENIKDKLPGGHGDH) are compositionally biased toward basic and acidic residues. The segment covering 255–274 (QQTGGTYGQQGHTGAATHGT) has biased composition (low complexity). Positions 288-301 (GMTGTGTHGTGGKK) are enriched in gly residues. The span at 302–312 (GVMENIKDKLP) shows a compositional bias: basic and acidic residues. The span at 361–382 (TGEKKAVMENIKDKLPGGHGDH) shows a compositional bias: basic and acidic residues. 2 stretches are compositionally biased toward low complexity: residues 383–402 (QQTG…THGT) and 412–429 (HGNT…TATG). A compositionally biased stretch (gly residues) spans 439 to 450 (GTTGTGTHGTDG). Residues 451-469 (VGEKKSLMDKIKDKLPGQH) are compositionally biased toward basic and acidic residues.

Belongs to the plant dehydrin family.

May reduce intracellular freezing damage during winter by hydrogen-bonding to the lattice of the nascent ice crystals, thus modifying the structure and/or propagation of ice crystals. The sequence is that of Cold shock protein CS66 (CS66) from Triticum aestivum (Wheat).